A 41-amino-acid chain; its full sequence is Large ribosomal subunit protein bL36 (41 aa).

This sequence belongs to the bacterial ribosomal protein bL36 family.

The chain is Large ribosomal subunit protein bL36 from Gluconacetobacter diazotrophicus (strain ATCC 49037 / DSM 5601 / CCUG 37298 / CIP 103539 / LMG 7603 / PAl5).